Consider the following 364-residue polypeptide: Fructose-bisphosphate aldolase A (364 aa).

The residue at position 5 (Tyr-5) is a Phosphotyrosine. Thr-9 bears the Phosphothreonine mark. Ser-36 and Ser-39 each carry phosphoserine. Lys-42 is modified (N6-acetyllysine; alternate). A Glycyl lysine isopeptide (Lys-Gly) (interchain with G-Cter in SUMO1); alternate cross-link involves residue Lys-42. Residue Lys-42 forms a Glycyl lysine isopeptide (Lys-Gly) (interchain with G-Cter in SUMO2); alternate linkage. Arg-43 serves as a coordination point for beta-D-fructose 1,6-bisphosphate. Ser-46 is subject to Phosphoserine. Lys-99 carries the N6-(2-hydroxyisobutyryl)lysine modification. At Lys-108 the chain carries N6-acetyllysine. Lys-111 carries the N6-acetyllysine; alternate modification. Lys-111 bears the N6-malonyllysine; alternate mark. Ser-132 bears the Phosphoserine mark. Position 147 is an N6-(2-hydroxyisobutyryl)lysine (Lys-147). Glu-188 functions as the Proton acceptor in the catalytic mechanism. The Schiff-base intermediate with dihydroxyacetone-P role is filled by Lys-230. A Phosphoserine modification is found at Ser-272. Residues Ser-272 to Gly-274, Ser-301, and Arg-304 each bind beta-D-fructose 1,6-bisphosphate. Lys-312 is modified (N6-malonyllysine). Lys-330 bears the N6-acetyllysine mark.

Belongs to the class I fructose-bisphosphate aldolase family. As to quaternary structure, homotetramer. Interacts with SNX9 and WAS. Interacts with FBP2; the interaction blocks FBP2 inhibition by physiological concentrations of AMP and reduces inhibition by Ca(2+).

It localises to the cytoplasm. The protein resides in the myofibril. Its subcellular location is the sarcomere. The protein localises to the i band. It is found in the m line. The enzyme catalyses beta-D-fructose 1,6-bisphosphate = D-glyceraldehyde 3-phosphate + dihydroxyacetone phosphate. It functions in the pathway carbohydrate degradation; glycolysis; D-glyceraldehyde 3-phosphate and glycerone phosphate from D-glucose: step 4/4. Functionally, catalyzes the reversible conversion of beta-D-fructose 1,6-bisphosphate (FBP) into two triose phosphate and plays a key role in glycolysis and gluconeogenesis. In addition, may also function as scaffolding protein. The chain is Fructose-bisphosphate aldolase A (Aldoa) from Mus musculus (Mouse).